Here is a 508-residue protein sequence, read N- to C-terminus: Photosystem II CP47 reaction center protein (508 aa).

A run of 6 helical transmembrane segments spans residues 21–36 (SVHL…WAGS), 101–115 (IVLS…IWHW), 140–156 (GIHL…FGAF), 203–218 (IAAG…FHLS), 237–252 (VLSS…AFVV), and 457–472 (TFAL…HGAR).

Belongs to the PsbB/PsbC family. PsbB subfamily. In terms of assembly, PSII is composed of 1 copy each of membrane proteins PsbA, PsbB, PsbC, PsbD, PsbE, PsbF, PsbH, PsbI, PsbJ, PsbK, PsbL, PsbM, PsbT, PsbX, PsbY, PsbZ, Psb30/Ycf12, at least 3 peripheral proteins of the oxygen-evolving complex and a large number of cofactors. It forms dimeric complexes. Binds multiple chlorophylls. PSII binds additional chlorophylls, carotenoids and specific lipids. serves as cofactor.

The protein localises to the plastid. Its subcellular location is the chloroplast thylakoid membrane. Functionally, one of the components of the core complex of photosystem II (PSII). It binds chlorophyll and helps catalyze the primary light-induced photochemical processes of PSII. PSII is a light-driven water:plastoquinone oxidoreductase, using light energy to abstract electrons from H(2)O, generating O(2) and a proton gradient subsequently used for ATP formation. The sequence is that of Photosystem II CP47 reaction center protein from Angiopteris evecta (Mule's foot fern).